A 1581-amino-acid polypeptide reads, in one-letter code: Calmodulin-regulated spectrin-associated protein 1 (1581 aa).

The Calponin-homology (CH) domain maps to 215-330 (ESPAHQKVRY…FIAELFWWFE (116 aa)). A phosphoserine mark is found at Ser216, Ser370, Ser374, and Ser415. The interval 351-399 (VLQQKSSRPPVPISNATKRSFLGSPAAMSPADQPPSTQPLAEGSHRYHL) is disordered. Residues 424-470 (RQKQQKVSQTEEIPDQRHRSNSLTRVDGQPRGAIGAWPDKKNRPVSQ) are disordered. Position 511 is a phosphothreonine (Thr511). Ser550, Ser553, Ser560, Ser572, and Ser586 each carry phosphoserine. Over residues 603–617 (KQITTKEDERGEGRP) the composition is skewed to basic and acidic residues. Residues 603 to 649 (KQITTKEDERGEGRPRTIMAKRPSEGSQPMVRKKVSGGHGSRDLNRT) form a disordered region. Ser626, Ser718, Ser724, Ser734, and Ser736 each carry phosphoserine. Basic and acidic residues predominate over residues 765 to 785 (ESAKLQEDMKVKEHEDKDDAS). 2 disordered regions span residues 765–803 (ESAK…SMSM) and 821–866 (LNSC…SKDP). Composition is skewed to low complexity over residues 792-803 (LSTTSQLSSMSM) and 826-837 (TKSSTSSSQKTT). A compositionally biased stretch (basic and acidic residues) spans 853-865 (QKREQSPGRHSKD). The sufficient for interaction with SPTBN1 stretch occupies residues 867-888 (ASLLASELVQLHMQLEEKRRAI). 2 coiled-coil regions span residues 869 to 905 (LLAS…QRLK) and 1005 to 1037 (DVNE…QEQL). The tract at residues 899-918 (SARQRLKLGKAAFLHVVKKG) is sufficient for interaction with calmodulin. 4 disordered regions span residues 1064-1143 (FVEP…ELPE), 1225-1251 (PDED…PGVG), 1288-1315 (QLEA…EEEK), and 1332-1428 (QALE…DWET). Ser1069 is modified (phosphoserine). Residues 1092 to 1103 (RPAELKVPKDRQ) are compositionally biased toward basic and acidic residues. Residues 1104 to 1132 (QGCSRSKTPTPSVETLPQSRSLPPSTHPR) show a composition bias toward polar residues. At Ser1133 the chain carries Phosphoserine. Residues 1225–1237 (PDEDGEVVGHESS) are compositionally biased toward basic and acidic residues. The stretch at 1265–1336 (AKKRAAFLLK…RRKQQQALEE (72 aa)) forms a coiled coil. Over residues 1342-1353 (PKSKPKKPRPKS) the composition is skewed to basic residues. Over residues 1361–1372 (SDSGTKCSSTHN) the composition is skewed to polar residues. Residues 1373–1390 (LSQTHSGSSLSLASAATT) show a composition bias toward low complexity. Residues Ser1378 and Ser1407 each carry the phosphoserine modification. A CKK domain is found at 1443 to 1576 (GPKLFKEPSS…QPKRPTVPKK (134 aa)). Residue Tyr1516 is modified to Phosphotyrosine.

The protein belongs to the CAMSAP1 family. Interacts with spectrin via SPTBN1; the interaction is direct. Interacts with calmodulin; calcium-dependent it prevents interaction with spectrin. In terms of tissue distribution, expressed in the central nervous system.

It localises to the cytoplasm. Its subcellular location is the cytoskeleton. Its function is as follows. Key microtubule-organizing protein that specifically binds the minus-end of non-centrosomal microtubules and regulates their dynamics and organization. Specifically recognizes growing microtubule minus-ends and stabilizes microtubules. Acts on free microtubule minus-ends that are not capped by microtubule-nucleating proteins or other factors and protects microtubule minus-ends from depolymerization. In contrast to CAMSAP2 and CAMSAP3, tracks along the growing tips of minus-end microtubules without significantly affecting the polymerization rate: binds at the very tip of the microtubules minus-end and acts as a minus-end tracking protein (-TIP) that dissociates from microtubules after allowing tubulin incorporation. Through interaction with spectrin may regulate neurite outgrowth. This Mus musculus (Mouse) protein is Calmodulin-regulated spectrin-associated protein 1 (Camsap1).